Consider the following 357-residue polypeptide: Neutral protease 2 homolog BDCG_00922 (357 aa).

A signal peptide spans methionine 1 to alanine 19. Residues glycine 20–arginine 182 constitute a propeptide that is removed on maturation. Disulfide bonds link cysteine 188–cysteine 259, cysteine 266–cysteine 284, and cysteine 297–cysteine 357. A Zn(2+)-binding site is contributed by histidine 308. Glutamate 309 is a catalytic residue. Residues histidine 312 and aspartate 323 each contribute to the Zn(2+) site.

It belongs to the peptidase M35 family. Zn(2+) serves as cofactor.

Its subcellular location is the secreted. It catalyses the reaction Preferential cleavage of bonds with hydrophobic residues in P1'. Also 3-Asn-|-Gln-4 and 8-Gly-|-Ser-9 bonds in insulin B chain.. Its function is as follows. Secreted metalloproteinase that allows assimilation of proteinaceous substrates. Shows high activities on basic nuclear substrates such as histone and protamine. This Ajellomyces dermatitidis (strain ER-3 / ATCC MYA-2586) (Blastomyces dermatitidis) protein is Neutral protease 2 homolog BDCG_00922.